A 258-amino-acid polypeptide reads, in one-letter code: Ribosomal RNA small subunit methyltransferase A (258 aa).

Positions 12, 14, 38, 59, 83, and 100 each coordinate S-adenosyl-L-methionine.

The protein belongs to the class I-like SAM-binding methyltransferase superfamily. rRNA adenine N(6)-methyltransferase family. RsmA subfamily.

It localises to the cytoplasm. The catalysed reaction is adenosine(1518)/adenosine(1519) in 16S rRNA + 4 S-adenosyl-L-methionine = N(6)-dimethyladenosine(1518)/N(6)-dimethyladenosine(1519) in 16S rRNA + 4 S-adenosyl-L-homocysteine + 4 H(+). In terms of biological role, specifically dimethylates two adjacent adenosines (A1518 and A1519) in the loop of a conserved hairpin near the 3'-end of 16S rRNA in the 30S particle. May play a critical role in biogenesis of 30S subunits. The protein is Ribosomal RNA small subunit methyltransferase A of Metamycoplasma arthritidis (strain 158L3-1) (Mycoplasma arthritidis).